A 738-amino-acid chain; its full sequence is Phosphoribosylformylglycinamidine synthase subunit PurL (738 aa).

Histidine 41 is a catalytic residue. 2 residues coordinate ATP: tyrosine 44 and lysine 83. Mg(2+) is bound at residue glutamate 85. Residues 86-89 (SHNH) and arginine 108 each bind substrate. Histidine 87 functions as the Proton acceptor in the catalytic mechanism. Residue aspartate 109 participates in Mg(2+) binding. Glutamine 233 provides a ligand contact to substrate. Aspartate 261 contributes to the Mg(2+) binding site. 305 to 307 (ESQ) is a binding site for substrate. Residues aspartate 490 and glycine 527 each coordinate ATP. Asparagine 528 lines the Mg(2+) pocket. Serine 530 contributes to the substrate binding site.

It belongs to the FGAMS family. As to quaternary structure, monomer. Part of the FGAM synthase complex composed of 1 PurL, 1 PurQ and 2 PurS subunits.

The protein localises to the cytoplasm. It catalyses the reaction N(2)-formyl-N(1)-(5-phospho-beta-D-ribosyl)glycinamide + L-glutamine + ATP + H2O = 2-formamido-N(1)-(5-O-phospho-beta-D-ribosyl)acetamidine + L-glutamate + ADP + phosphate + H(+). It participates in purine metabolism; IMP biosynthesis via de novo pathway; 5-amino-1-(5-phospho-D-ribosyl)imidazole from N(2)-formyl-N(1)-(5-phospho-D-ribosyl)glycinamide: step 1/2. In terms of biological role, part of the phosphoribosylformylglycinamidine synthase complex involved in the purines biosynthetic pathway. Catalyzes the ATP-dependent conversion of formylglycinamide ribonucleotide (FGAR) and glutamine to yield formylglycinamidine ribonucleotide (FGAM) and glutamate. The FGAM synthase complex is composed of three subunits. PurQ produces an ammonia molecule by converting glutamine to glutamate. PurL transfers the ammonia molecule to FGAR to form FGAM in an ATP-dependent manner. PurS interacts with PurQ and PurL and is thought to assist in the transfer of the ammonia molecule from PurQ to PurL. In Alkaliphilus metalliredigens (strain QYMF), this protein is Phosphoribosylformylglycinamidine synthase subunit PurL.